Here is a 1478-residue protein sequence, read N- to C-terminus: GTPase-activating protein and VPS9 domain-containing protein 1 (1478 aa).

Residues serine 147–glycine 385 enclose the Ras-GAP domain. Position 227 is a phosphoserine (serine 227). Phosphothreonine occurs at positions 390 and 458. The residue at position 460 (tyrosine 460) is a Phosphotyrosine. Phosphoserine is present on serine 466. The residue at position 470 (threonine 470) is a Phosphothreonine. 2 positions are modified to phosphoserine: serine 566 and serine 569. Disordered regions lie at residues glycine 574 to glycine 608, glutamate 739 to glutamine 820, and histidine 846 to phenylalanine 874. The segment covering glycine 578–serine 588 has biased composition (polar residues). A phosphoserine mark is found at serine 742, serine 746, and serine 757. Positions serine 758–aspartate 777 are enriched in polar residues. Threonine 762 is modified (phosphothreonine). Residue serine 766 is modified to Phosphoserine. Residues isoleucine 778–cysteine 789 show a composition bias toward basic and acidic residues. Phosphoserine occurs at positions 876, 902, 903, 908, 914, and 966. The span at glutamine 889–serine 902 shows a compositional bias: basic and acidic residues. 2 disordered regions span residues glutamine 889–serine 1023 and threonine 1043–leucine 1064. Basic and acidic residues-rich tracts occupy residues aspartate 954–arginine 975 and glutamate 997–proline 1008. A compositionally biased stretch (polar residues) spans serine 1012–serine 1023. A phosphoserine mark is found at serine 1019, serine 1046, serine 1096, and serine 1103. Residues isoleucine 1338–lysine 1478 form the VPS9 domain.

The protein belongs to the GAPVD1 family. As to quaternary structure, interacts with TRIP10/CIP4. Interacts with RAB5A. (Microbial infection) Interacts with P.falciparum (strain 3D7) CK1. In terms of tissue distribution, expressed in erythrocytes (at protein level).

It localises to the membrane. The protein localises to the endosome. Functionally, acts both as a GTPase-activating protein (GAP) and a guanine nucleotide exchange factor (GEF), and participates in various processes such as endocytosis, insulin receptor internalization or LC2A4/GLUT4 trafficking. Acts as a GEF for the Ras-related protein RAB31 by exchanging bound GDP for free GTP, leading to regulate LC2A4/GLUT4 trafficking. In the absence of insulin, it maintains RAB31 in an active state and promotes a futile cycle between LC2A4/GLUT4 storage vesicles and early endosomes, retaining LC2A4/GLUT4 inside the cells. Upon insulin stimulation, it is translocated to the plasma membrane, releasing LC2A4/GLUT4 from intracellular storage vesicles. Also involved in EGFR trafficking and degradation, possibly by promoting EGFR ubiquitination and subsequent degradation by the proteasome. Has GEF activity for Rab5 and GAP activity for Ras. The sequence is that of GTPase-activating protein and VPS9 domain-containing protein 1 (GAPVD1) from Homo sapiens (Human).